Here is a 186-residue protein sequence, read N- to C-terminus: Ribosome-recycling factor (186 aa).

The protein belongs to the RRF family.

It is found in the cytoplasm. In terms of biological role, responsible for the release of ribosomes from messenger RNA at the termination of protein biosynthesis. May increase the efficiency of translation by recycling ribosomes from one round of translation to another. This Rickettsia prowazekii (strain Madrid E) protein is Ribosome-recycling factor.